The chain runs to 367 residues: Histidinol-phosphate aminotransferase 1 (367 aa).

The residue at position 226 (Lys226) is an N6-(pyridoxal phosphate)lysine.

Belongs to the class-II pyridoxal-phosphate-dependent aminotransferase family. Histidinol-phosphate aminotransferase subfamily. As to quaternary structure, homodimer. It depends on pyridoxal 5'-phosphate as a cofactor.

The catalysed reaction is L-histidinol phosphate + 2-oxoglutarate = 3-(imidazol-4-yl)-2-oxopropyl phosphate + L-glutamate. It functions in the pathway amino-acid biosynthesis; L-histidine biosynthesis; L-histidine from 5-phospho-alpha-D-ribose 1-diphosphate: step 7/9. In Haemophilus influenzae (strain ATCC 51907 / DSM 11121 / KW20 / Rd), this protein is Histidinol-phosphate aminotransferase 1 (hisC1).